A 607-amino-acid chain; its full sequence is T-box transcription factor TBX18 (607 aa).

The Engrailed homology 1 repressor signature appears at 18 to 28; that stretch reads HAFSVEALIGA. The tract at residues 30 to 141 is disordered; sequence KQQQLQKKRR…PLPSPQAPRV (112 aa). Positions 36 to 40 match the Nuclear localization signal motif; it reads KKRRK. Positions 44-53 are enriched in low complexity; sequence EEAAGAVDDG. A DNA-binding region (T-box) is located at residues 143–330; the sequence is LQGAELWKRF…RNPFAKGFRD (188 aa).

Homodimer. Can form a heterodimer with TBX15. Interacts with GATA4 and NKX2-5. Interacts with PAX3. Interacts (via engrailed homology 1 repressor motif) with TLE3; this interaction represses TBX18 transcriptional activity. Interacts with SIX1.

It localises to the nucleus. In terms of biological role, acts as a transcriptional repressor involved in developmental processes of a variety of tissues and organs, including the heart and coronary vessels, the ureter and the vertebral column. Required for embryonic development of the sino atrial node (SAN) head area. This chain is T-box transcription factor TBX18 (TBX18), found in Homo sapiens (Human).